The primary structure comprises 277 residues: S-formylglutathione hydrolase FrmB (277 aa).

Catalysis depends on charge relay system residues Ser-145, Asp-221, and His-254.

This sequence belongs to the esterase D family.

The enzyme catalyses S-formylglutathione + H2O = formate + glutathione + H(+). In terms of biological role, serine hydrolase involved in the detoxification of formaldehyde. Hydrolyzes S-formylglutathione to glutathione and formate. The polypeptide is S-formylglutathione hydrolase FrmB (frmB) (Escherichia coli O1:K1 / APEC).